The sequence spans 192 residues: Ornithine lipid N-methyltransferase (192 aa).

The protein belongs to the methyltransferase superfamily.

The catalysed reaction is an N(2)-[(3R)-3-(2-saturated-acyloxy)acyl]-L-ornithine lipid + 3 S-adenosyl-L-methionine = an N,N,N-trimethylornithine lipid + 3 S-adenosyl-L-homocysteine + 3 H(+). Its function is as follows. Catalyzes the 3-fold methylation of ornithine lipids. Forms ornithine lipids that are mono-, di-, and trimethylated on the delta-nitrogen of the ornithine head group. This is Ornithine lipid N-methyltransferase from Singulisphaera acidiphila (strain ATCC BAA-1392 / DSM 18658 / VKM B-2454 / MOB10).